The sequence spans 509 residues: Bifunctional purine biosynthesis protein PurH (509 aa).

The 144-residue stretch at 1–144 folds into the MGS-like domain; the sequence is MKRALISVSD…KNYAAVTVVV (144 aa).

The protein belongs to the PurH family.

The catalysed reaction is (6R)-10-formyltetrahydrofolate + 5-amino-1-(5-phospho-beta-D-ribosyl)imidazole-4-carboxamide = 5-formamido-1-(5-phospho-D-ribosyl)imidazole-4-carboxamide + (6S)-5,6,7,8-tetrahydrofolate. It carries out the reaction IMP + H2O = 5-formamido-1-(5-phospho-D-ribosyl)imidazole-4-carboxamide. The protein operates within purine metabolism; IMP biosynthesis via de novo pathway; 5-formamido-1-(5-phospho-D-ribosyl)imidazole-4-carboxamide from 5-amino-1-(5-phospho-D-ribosyl)imidazole-4-carboxamide (10-formyl THF route): step 1/1. Its pathway is purine metabolism; IMP biosynthesis via de novo pathway; IMP from 5-formamido-1-(5-phospho-D-ribosyl)imidazole-4-carboxamide: step 1/1. This is Bifunctional purine biosynthesis protein PurH from Listeria welshimeri serovar 6b (strain ATCC 35897 / DSM 20650 / CCUG 15529 / CIP 8149 / NCTC 11857 / SLCC 5334 / V8).